The primary structure comprises 132 residues: S-protein homolog 8 (132 aa).

The first 20 residues, Met-1 to Gly-20, serve as a signal peptide directing secretion.

This sequence belongs to the plant self-incompatibility (S1) protein family. Mostly expressed in seedlings, stems, leaves and floral tissues, and, to a lower extent, in roots.

It localises to the secreted. In Arabidopsis thaliana (Mouse-ear cress), this protein is S-protein homolog 8.